A 252-amino-acid polypeptide reads, in one-letter code: Aspartate/glutamate leucyltransferase (252 aa).

This sequence belongs to the R-transferase family. Bpt subfamily.

The protein resides in the cytoplasm. It carries out the reaction N-terminal L-glutamyl-[protein] + L-leucyl-tRNA(Leu) = N-terminal L-leucyl-L-glutamyl-[protein] + tRNA(Leu) + H(+). The enzyme catalyses N-terminal L-aspartyl-[protein] + L-leucyl-tRNA(Leu) = N-terminal L-leucyl-L-aspartyl-[protein] + tRNA(Leu) + H(+). In terms of biological role, functions in the N-end rule pathway of protein degradation where it conjugates Leu from its aminoacyl-tRNA to the N-termini of proteins containing an N-terminal aspartate or glutamate. This Agrobacterium fabrum (strain C58 / ATCC 33970) (Agrobacterium tumefaciens (strain C58)) protein is Aspartate/glutamate leucyltransferase.